The chain runs to 151 residues: ALK and LTK ligand 2 (151 aa).

The first 25 residues, 1–25, serve as a signal peptide directing secretion; it reads MRVSGRPMLLALLLLLSTVGDPGHA. 2 cysteine pairs are disulfide-bonded: Cys112–Cys148 and Cys126–Cys135.

It belongs to the ALKAL family. As to quaternary structure, homodimer.

It is found in the secreted. The protein resides in the cell membrane. Its function is as follows. Cytokine that acts as a physiological ligand for receptor tyrosine kinases LTK and ALK, leading to their activation. Cytokine-binding is sufficient to activate LTK. In contrast, ALKAL2-driven activation of ALK is coupled with heparin-binding to ALK. Stimulation of ALK signaling is involved in neural development and regulation of energy expenditure. The chain is ALK and LTK ligand 2 from Rattus norvegicus (Rat).